The sequence spans 627 residues: (-)-alpha-pinene synthase 1, chloroplastic (627 aa).

The transit peptide at 1–36 (MALVSIAPLASKSCLHKSLSSSAHELKTICRTIPTL) directs the protein to the chloroplast. Mg(2+)-binding residues include aspartate 378, aspartate 382, and aspartate 530. The DDXXD motif signature appears at 378-382 (DDMYD).

It belongs to the terpene synthase family. Tpsd subfamily. Mg(2+) serves as cofactor. The cofactor is Mn(2+).

The protein resides in the plastid. It localises to the chloroplast. The enzyme catalyses (2E)-geranyl diphosphate = (1S,5S)-beta-pinene + diphosphate. It catalyses the reaction (2E)-geranyl diphosphate = (1S,5S)-alpha-pinene + diphosphate. It functions in the pathway terpene metabolism; oleoresin biosynthesis. Its function is as follows. Terpene synthase (TPS) involved in the biosynthesis of monoterpene natural products included in conifer oleoresin secretions and volatile emissions; these compounds contribute to biotic and abiotic stress defense against herbivores and pathogens. Catalyzes the conversion of (2E)-geranyl diphosphate (GPP) to (1S,5S)-beta-pinene. This Picea sitchensis (Sitka spruce) protein is (-)-alpha-pinene synthase 1, chloroplastic.